Reading from the N-terminus, the 463-residue chain is tRNA modification GTPase MnmE (463 aa).

(6S)-5-formyl-5,6,7,8-tetrahydrofolate-binding residues include arginine 27, glutamate 92, and lysine 131. Residues 234 to 386 (GIKLAIVGKP…LEDHLLKIYS (153 aa)) form the TrmE-type G domain. Residue asparagine 244 participates in K(+) binding. GTP is bound by residues 244 to 249 (NVGKSS), 263 to 269 (TNVAGTT), and 288 to 291 (DTAG). Serine 248 is a Mg(2+) binding site. Residues threonine 263, valine 265, and threonine 268 each coordinate K(+). A Mg(2+)-binding site is contributed by threonine 269. Lysine 463 contacts (6S)-5-formyl-5,6,7,8-tetrahydrofolate.

This sequence belongs to the TRAFAC class TrmE-Era-EngA-EngB-Septin-like GTPase superfamily. TrmE GTPase family. Homodimer. Heterotetramer of two MnmE and two MnmG subunits. K(+) serves as cofactor.

The protein localises to the cytoplasm. In terms of biological role, exhibits a very high intrinsic GTPase hydrolysis rate. Involved in the addition of a carboxymethylaminomethyl (cmnm) group at the wobble position (U34) of certain tRNAs, forming tRNA-cmnm(5)s(2)U34. The sequence is that of tRNA modification GTPase MnmE from Mycoplasmopsis synoviae (strain 53) (Mycoplasma synoviae).